Here is a 293-residue protein sequence, read N- to C-terminus: N-acetylneuraminate lyase (293 aa).

Ser-47, Thr-48, and Tyr-136 together coordinate aceneuramate. Residue Tyr-136 is the Proton donor of the active site. Catalysis depends on Lys-164, which acts as the Schiff-base intermediate with substrate. Aceneuramate is bound by residues Thr-166, Gly-188, Asp-190, Glu-191, Ser-207, and Tyr-251.

This sequence belongs to the DapA family. NanA subfamily. As to quaternary structure, homotetramer.

The protein resides in the cytoplasm. It catalyses the reaction aceneuramate = aldehydo-N-acetyl-D-mannosamine + pyruvate. Its pathway is amino-sugar metabolism; N-acetylneuraminate degradation; D-fructose 6-phosphate from N-acetylneuraminate: step 1/5. Its function is as follows. Catalyzes the reversible aldol cleavage of N-acetylneuraminic acid (sialic acid; Neu5Ac) to form pyruvate and N-acetylmannosamine (ManNAc) via a Schiff base intermediate. The protein is N-acetylneuraminate lyase of Pasteurella multocida (strain Pm70).